We begin with the raw amino-acid sequence, 1490 residues long: DNA-directed RNA polymerase subunit beta' (1490 aa).

Cys-67, Cys-69, Cys-82, and Cys-85 together coordinate Zn(2+). 3 residues coordinate Mg(2+): Asp-499, Asp-501, and Asp-503. Zn(2+) contacts are provided by Cys-868, Cys-944, Cys-951, and Cys-954.

Belongs to the RNA polymerase beta' chain family. As to quaternary structure, the RNAP catalytic core consists of 2 alpha, 1 beta, 1 beta' and 1 omega subunit. When a sigma factor is associated with the core the holoenzyme is formed, which can initiate transcription. Mg(2+) is required as a cofactor. It depends on Zn(2+) as a cofactor.

The catalysed reaction is RNA(n) + a ribonucleoside 5'-triphosphate = RNA(n+1) + diphosphate. Its function is as follows. DNA-dependent RNA polymerase catalyzes the transcription of DNA into RNA using the four ribonucleoside triphosphates as substrates. The chain is DNA-directed RNA polymerase subunit beta' from Chlorobaculum tepidum (strain ATCC 49652 / DSM 12025 / NBRC 103806 / TLS) (Chlorobium tepidum).